The primary structure comprises 667 residues: Soluble guanylate cyclase 89Da (667 aa).

Histidine 104 lines the heme pocket. The tract at residues 337–364 is disordered; sequence AQEFSESHPVDDDESAREDEIDPATGER. Residues 347 to 358 show a composition bias toward acidic residues; it reads DDDESAREDEID. A coiled-coil region spans residues 427-455; sequence QHCSKLEIMFEKEEQRSDELEKSLELADS. The Guanylate cyclase domain occupies 491–617; sequence SVIFLEVMNV…DTVNTASRME (127 aa).

The protein belongs to the adenylyl cyclase class-4/guanylyl cyclase family. As to quaternary structure, heterodimer; with Gyc88E, in the presence of magnesium or manganese. It depends on heme as a cofactor.

The protein localises to the cytoplasm. It catalyses the reaction GTP = 3',5'-cyclic GMP + diphosphate. Its activity is regulated as follows. Probably not activated by nitric oxide (NO). Heterodimer also exhibits some stimulation, some compounds (SIN-1 and two of the NONOates) that were ineffective at stimulating Gyc-88E alone did stimulate the heterodimer. Heterodimers with Gyc-89Da and Gyc-89Db are activated in response to changing oxygen concentrations, alerting flies to hypoxic environments. Under normal oxygen concentrations, oxygen binds to the heme group and results in low levels of guanylyl cyclase activity. When exposed to reduced oxygen concentrations, the oxygen dissociates from the heme group resulting in activation of the enzyme. This Drosophila melanogaster (Fruit fly) protein is Soluble guanylate cyclase 89Da.